Consider the following 1035-residue polypeptide: Kinesin-like protein KIN-4A (1035 aa).

One can recognise a Kinesin motor domain in the interval 11–370 (SVKVAVHIRP…LKYANRARNI (360 aa)). 90–97 (GQTGSGKT) provides a ligand contact to ATP. Coiled-coil stretches lie at residues 408–436 (CAEV…HEYR), 504–707 (QNSM…RKSS), and 881–911 (KEIV…IATS). The interval 704–724 (RKSSPREHSAGTNGFGTNGQT) is disordered.

It belongs to the TRAFAC class myosin-kinesin ATPase superfamily. Kinesin family. KIN-4 subfamily. As to quaternary structure, homodimer. As to expression, expressed in stems and flowers. Detected in cells undergoing secondary wall deposition including developing interfascicular fibers and xylem cells, but also in dividing cells and expanding/elongating parenchyma cells.

The protein localises to the cytoplasm. The protein resides in the cytoskeleton. Functionally, kinesin-like motor protein involved in the control of the oriented deposition of cellulose microfibrils. Its motor activity is directed toward the microtubule's plus end. It possesses the potential to drive long-distance transport of cargo along cortical microtubules. Regulates cell wall mechanics during cell elongation, by the regulation of primary and secondary walls deposition. Contributes to cortical microtubule-mediated trafficking of cell wall components. This is Kinesin-like protein KIN-4A from Arabidopsis thaliana (Mouse-ear cress).